Reading from the N-terminus, the 295-residue chain is HTH-type transcriptional regulator ShiR (295 aa).

In terms of domain architecture, HTH lysR-type spans 1–58; the sequence is MEIRWLEGFIAVAEELHFSNAAIRLGMPQSPLSQLIRRLESELGQKLFDRSTRSVELT. Positions 18 to 37 form a DNA-binding region, H-T-H motif; sequence FSNAAIRLGMPQSPLSQLIR.

This sequence belongs to the LysR transcriptional regulatory family.

Activates expression of the shikimate transporter ShiA in the presence of shikimate. Binds to the shiA promoter region. The protein is HTH-type transcriptional regulator ShiR of Corynebacterium glutamicum (strain R).